Consider the following 349-residue polypeptide: Adenosine deaminase (349 aa).

Zn(2+) contacts are provided by H25 and H27. H27, D29, and G182 together coordinate substrate. H209 serves as a coordination point for Zn(2+). The Proton donor role is filled by E212. Position 289 (D289) interacts with Zn(2+).

Belongs to the metallo-dependent hydrolases superfamily. Adenosine and AMP deaminases family. Adenosine deaminase subfamily. Zn(2+) serves as cofactor.

The enzyme catalyses adenosine + H2O + H(+) = inosine + NH4(+). It catalyses the reaction 2'-deoxyadenosine + H2O + H(+) = 2'-deoxyinosine + NH4(+). Its function is as follows. Catalyzes the hydrolytic deamination of adenosine and 2-deoxyadenosine. The protein is Adenosine deaminase of Streptococcus mutans serotype c (strain ATCC 700610 / UA159).